The primary structure comprises 498 residues: Galactose-1-phosphate uridylyltransferase (498 aa).

The protein belongs to the galactose-1-phosphate uridylyltransferase type 2 family.

It is found in the cytoplasm. The enzyme catalyses alpha-D-galactose 1-phosphate + UDP-alpha-D-glucose = alpha-D-glucose 1-phosphate + UDP-alpha-D-galactose. Its pathway is carbohydrate metabolism; galactose metabolism. This Latilactobacillus sakei subsp. sakei (strain 23K) (Lactobacillus sakei subsp. sakei) protein is Galactose-1-phosphate uridylyltransferase.